Consider the following 148-residue polypeptide: uncharacterized protein (148 aa).

This is an uncharacterized protein from Methanocaldococcus jannaschii (strain ATCC 43067 / DSM 2661 / JAL-1 / JCM 10045 / NBRC 100440) (Methanococcus jannaschii).